We begin with the raw amino-acid sequence, 23 residues long: Fimbrial protein (23 aa).

A disulfide bond links Cys-8 and Cys-21.

Belongs to the N-Me-Phe pilin family. In terms of assembly, the pili are polar flexible filaments of about 5.4 nanometers diameter and 2.5 micrometers average length; they consist of only a single polypeptide chain arranged in a helical configuration of five subunits per turn in the assembled pilus.

The protein resides in the fimbrium. The chain is Fimbrial protein (pil) from Pseudomonas aeruginosa.